The primary structure comprises 196 residues: Nucleoid occlusion factor SlmA (196 aa).

Positions 7-68 (PNRRDEILQA…GLIEFIEESI (62 aa)) constitute an HTH tetR-type domain. The segment at residues 31 to 50 (TTAKLAKQVGVSEAALYRHF) is a DNA-binding region (H-T-H motif). Residues 71–93 (RVNRILEDEKDTLKRIELLLKLL) adopt a coiled-coil conformation.

Belongs to the nucleoid occlusion factor SlmA family. Homodimer. Interacts with FtsZ.

It localises to the cytoplasm. It is found in the nucleoid. Its function is as follows. Required for nucleoid occlusion (NO) phenomenon, which prevents Z-ring formation and cell division over the nucleoid. Acts as a DNA-associated cell division inhibitor that binds simultaneously chromosomal DNA and FtsZ, and disrupts the assembly of FtsZ polymers. SlmA-DNA-binding sequences (SBS) are dispersed on non-Ter regions of the chromosome, preventing FtsZ polymerization at these regions. This Aliivibrio fischeri (strain MJ11) (Vibrio fischeri) protein is Nucleoid occlusion factor SlmA.